Here is a 149-residue protein sequence, read N- to C-terminus: Arginine repressor (149 aa).

It belongs to the ArgR family.

It is found in the cytoplasm. It participates in amino-acid biosynthesis; L-arginine biosynthesis [regulation]. Its function is as follows. Regulates arginine biosynthesis genes. This is Arginine repressor from Listeria welshimeri serovar 6b (strain ATCC 35897 / DSM 20650 / CCUG 15529 / CIP 8149 / NCTC 11857 / SLCC 5334 / V8).